Consider the following 984-residue polypeptide: Putative formate dehydrogenase SAUSA300_2258 (984 aa).

Positions 3–79 (EHLVVTLDGK…PMTVNTVNND (77 aa)) constitute a 2Fe-2S ferredoxin-type domain. Cysteine 37, cysteine 48, cysteine 51, and cysteine 63 together coordinate [2Fe-2S] cluster. Residues 79–119 (DVKDAQKEALDRILEKHMLYCTVCDYNNGDCEIHNTMDAWG) enclose the 4Fe-4S His(Cys)3-ligated-type domain. [4Fe-4S] cluster contacts are provided by histidine 95, cysteine 99, cysteine 102, cysteine 109, cysteine 147, cysteine 150, cysteine 153, cysteine 157, cysteine 190, cysteine 193, cysteine 196, cysteine 200, cysteine 264, cysteine 267, cysteine 271, and cysteine 299. 2 4Fe-4S ferredoxin-type domains span residues 138–165 (PFYR…VNET) and 181–211 (NDVP…VNME). Residues 252–984 (MRKERIKKTK…YVFPGNQVDK (733 aa)) are formate dehydrogenase. A 4Fe-4S Mo/W bis-MGD-type domain is found at 257–313 (IKKTKTVCTYCGVGCSFEVWTKDREILKVQPSHDSPANKIATCVKGKFSWGHINSDQ).

The protein in the C-terminal section; belongs to the prokaryotic molybdopterin-containing oxidoreductase family. [2Fe-2S] cluster is required as a cofactor. [4Fe-4S] cluster serves as cofactor. It depends on Mo-bis(molybdopterin guanine dinucleotide) as a cofactor.

It catalyses the reaction formate + NAD(+) = CO2 + NADH. The polypeptide is Putative formate dehydrogenase SAUSA300_2258 (Staphylococcus aureus (strain USA300)).